A 287-amino-acid polypeptide reads, in one-letter code: Bifunctional protein FolD (287 aa).

Residues 166-168 (GAS) and I232 each bind NADP(+).

This sequence belongs to the tetrahydrofolate dehydrogenase/cyclohydrolase family. As to quaternary structure, homodimer.

It catalyses the reaction (6R)-5,10-methylene-5,6,7,8-tetrahydrofolate + NADP(+) = (6R)-5,10-methenyltetrahydrofolate + NADPH. The catalysed reaction is (6R)-5,10-methenyltetrahydrofolate + H2O = (6R)-10-formyltetrahydrofolate + H(+). The protein operates within one-carbon metabolism; tetrahydrofolate interconversion. Its function is as follows. Catalyzes the oxidation of 5,10-methylenetetrahydrofolate to 5,10-methenyltetrahydrofolate and then the hydrolysis of 5,10-methenyltetrahydrofolate to 10-formyltetrahydrofolate. The protein is Bifunctional protein FolD of Pectobacterium atrosepticum (strain SCRI 1043 / ATCC BAA-672) (Erwinia carotovora subsp. atroseptica).